A 647-amino-acid chain; its full sequence is DNA ligase (647 aa).

NAD(+)-binding positions include 30–34 (DEEYD), 79–80 (SM), and glutamate 105. The active-site N6-AMP-lysine intermediate is the lysine 107. The NAD(+) site is built by arginine 128, glutamate 162, and lysine 301. Residues cysteine 395, cysteine 398, cysteine 411, and cysteine 416 each coordinate Zn(2+). Residues 570–647 (KSDGVIFGKT…ESAFNELVKE (78 aa)) form the BRCT domain.

This sequence belongs to the NAD-dependent DNA ligase family. LigA subfamily. The cofactor is Mg(2+). It depends on Mn(2+) as a cofactor.

It carries out the reaction NAD(+) + (deoxyribonucleotide)n-3'-hydroxyl + 5'-phospho-(deoxyribonucleotide)m = (deoxyribonucleotide)n+m + AMP + beta-nicotinamide D-nucleotide.. Functionally, DNA ligase that catalyzes the formation of phosphodiester linkages between 5'-phosphoryl and 3'-hydroxyl groups in double-stranded DNA using NAD as a coenzyme and as the energy source for the reaction. It is essential for DNA replication and repair of damaged DNA. In Campylobacter jejuni (strain RM1221), this protein is DNA ligase.